Consider the following 293-residue polypeptide: Aspartate carbamoyltransferase catalytic subunit (293 aa).

2 residues coordinate carbamoyl phosphate: Arg-50 and Thr-51. Lys-78 serves as a coordination point for L-aspartate. 3 residues coordinate carbamoyl phosphate: Arg-100, His-127, and Gln-130. Residues Arg-160 and Arg-210 each contribute to the L-aspartate site. Carbamoyl phosphate contacts are provided by Ala-253 and Pro-254.

It belongs to the aspartate/ornithine carbamoyltransferase superfamily. ATCase family. In terms of assembly, heterododecamer (2C3:3R2) of six catalytic PyrB chains organized as two trimers (C3), and six regulatory PyrI chains organized as three dimers (R2).

The enzyme catalyses carbamoyl phosphate + L-aspartate = N-carbamoyl-L-aspartate + phosphate + H(+). It functions in the pathway pyrimidine metabolism; UMP biosynthesis via de novo pathway; (S)-dihydroorotate from bicarbonate: step 2/3. Functionally, catalyzes the condensation of carbamoyl phosphate and aspartate to form carbamoyl aspartate and inorganic phosphate, the committed step in the de novo pyrimidine nucleotide biosynthesis pathway. The chain is Aspartate carbamoyltransferase catalytic subunit from Staphylococcus epidermidis (strain ATCC 35984 / DSM 28319 / BCRC 17069 / CCUG 31568 / BM 3577 / RP62A).